The primary structure comprises 836 residues: Neuroligin-2 (836 aa).

Positions 1-14 (MWLLALCLVGLAGA) are cleaved as a signal peptide. Residues 15–678 (QRGGGGPGGG…DSRDYSTELS (664 aa)) lie on the Extracellular side of the membrane. Residues Asn98 and Asn136 are each glycosylated (N-linked (GlcNAc...) asparagine). Cystine bridges form between Cys106–Cys141, Cys317–Cys328, and Cys487–Cys521. Asn522 carries an N-linked (GlcNAc...) asparagine glycan. The segment at 623-661 (PPYATRWPPRTPGPGTSGTRRPPPPATLPPESDIDLGPR) is disordered. Residues 679-699 (VTVAVGASLLFLNILAFAALY) form a helical membrane-spanning segment. The segment at 679–699 (VTVAVGASLLFLNILAFAALY) is required for interaction with LHFPL4. Topologically, residues 700 to 836 (YKRDRRQELR…LPHPHSTTRV (137 aa)) are cytoplasmic. Disordered regions lie at residues 711–735 (RRLSPPGGSGSGVPGGGPLLPTAGR) and 791–836 (LLPS…TTRV). 2 positions are modified to phosphoserine: Ser714 and Ser719. A compositionally biased stretch (gly residues) spans 717-728 (GGSGSGVPGGGP). A compositionally biased stretch (pro residues) spans 796–819 (LGPPPPPPPPSLHPFGPFPPPPPT). Over residues 824–836 (NNTLPHPHSTTRV) the composition is skewed to polar residues.

This sequence belongs to the type-B carboxylesterase/lipase family. As to quaternary structure, interacts with neurexins NRXN1, NRXN2 and NRXN3. Interaction with neurexins is mediated by heparan sulfate glycan modification on neurexin. Interacts (via its C-terminus) with DLG4/PSD-95 (via PDZ domain 3). Interacts with PATJ. Interacts with GPHN. Interacts with MDGA1 and MDGA2. Found in a complex with MAGI2 and IGSF9B, where it interacts with MAGI2 (via WW 1, WW 2 and PDZ 2 domains). Identified in a complex of 720 kDa composed of LHFPL4, NLGN2, GABRA1, GABRB2, GABRG2 and GABRB3. Interacts with LHFPL4; leading to mutual regulation of the protein level and synaptic clustering. Interacts with GABRA1. Detected on hippocampus neurons, especially at inhibitory synapses. Detected in retina, in the outer and inner plexiform layer. Detected in pancreas, in islet of Langerhans beta cells (at protein level). Expressed in brain, spinal cord and dorsal root ganglion. Detected in brain, and at lower levels in pancreas islet beta cells.

It localises to the cell membrane. The protein resides in the postsynaptic cell membrane. It is found in the presynaptic cell membrane. In terms of biological role, transmembrane scaffolding protein involved in cell-cell interactions via its interactions with neurexin family members. Mediates cell-cell interactions both in neurons and in other types of cells, such as Langerhans beta cells. Plays a role in synapse function and synaptic signal transmission, especially via gamma-aminobutyric acid receptors (GABA(A) receptors). Functions by recruiting and clustering synaptic proteins. Promotes clustering of postsynaptic GABRG2 and GPHN. Promotes clustering of postsynaptic LHFPL4. Modulates signaling by inhibitory synapses, and thereby plays a role in controlling the ratio of signaling by excitatory and inhibitory synapses and information processing. Required for normal signal amplitude from inhibitory synapses, but is not essential for normal signal frequency. May promote the initial formation of synapses, but is not essential for this. In vitro, triggers the de novo formation of presynaptic structures. Mediates cell-cell interactions between Langerhans beta cells and modulates insulin secretion. The protein is Neuroligin-2 (Nlgn2) of Rattus norvegicus (Rat).